The sequence spans 289 residues: 3-methyl-2-oxobutanoate hydroxymethyltransferase (289 aa).

The segment covering 1–15 (MSTTFQLDTSTSRAN) has biased composition (polar residues). The disordered stretch occupies residues 1–20 (MSTTFQLDTSTSRANPTPAP). Residues Asp-67 and Asp-106 each coordinate Mg(2+). 3-methyl-2-oxobutanoate contacts are provided by residues 67 to 68 (DS), Asp-106, and Lys-136. Glu-138 contacts Mg(2+). The active-site Proton acceptor is the Glu-205.

This sequence belongs to the PanB family. Homodecamer; pentamer of dimers. The cofactor is Mg(2+).

It localises to the cytoplasm. The catalysed reaction is 3-methyl-2-oxobutanoate + (6R)-5,10-methylene-5,6,7,8-tetrahydrofolate + H2O = 2-dehydropantoate + (6S)-5,6,7,8-tetrahydrofolate. It participates in cofactor biosynthesis; (R)-pantothenate biosynthesis; (R)-pantoate from 3-methyl-2-oxobutanoate: step 1/2. Its function is as follows. Catalyzes the reversible reaction in which hydroxymethyl group from 5,10-methylenetetrahydrofolate is transferred onto alpha-ketoisovalerate to form ketopantoate. The sequence is that of 3-methyl-2-oxobutanoate hydroxymethyltransferase from Novosphingobium aromaticivorans (strain ATCC 700278 / DSM 12444 / CCUG 56034 / CIP 105152 / NBRC 16084 / F199).